We begin with the raw amino-acid sequence, 423 residues long: Protein CLP1 homolog (423 aa).

ATP contacts are provided by residues E16, K57, and 119–124; that span reads DVGKST.

It belongs to the Clp1 family. Clp1 subfamily.

It is found in the nucleus. Required for endonucleolytic cleavage during polyadenylation-dependent pre-mRNA 3'-end formation. This is Protein CLP1 homolog (cbc) from Drosophila melanogaster (Fruit fly).